We begin with the raw amino-acid sequence, 83 residues long: Small ribosomal subunit protein bS16 (83 aa).

The protein belongs to the bacterial ribosomal protein bS16 family.

This is Small ribosomal subunit protein bS16 from Shewanella halifaxensis (strain HAW-EB4).